The following is a 1484-amino-acid chain: Chromosome partition protein MukB (1484 aa).

34 to 41 provides a ligand contact to ATP; that stretch reads GGNGAGKS. Coiled-coil stretches lie at residues 338 to 415, 496 to 604, 781 to 805, 835 to 868, 903 to 1115, and 1206 to 1265; these read NLVQ…RAIQ, QTAR…ALAW, AARE…ATLS, EAEM…HYDQ, HDAQ…SAKA, and DDPV…LQAV. The tract at residues 666–783 is flexible hinge; that stretch reads PGGTDDARLT…AVPLFGRAAR (118 aa).

This sequence belongs to the SMC family. MukB subfamily. Homodimerization via its hinge domain. Binds to DNA via its C-terminal region. Interacts, and probably forms a ternary complex, with MukE and MukF via its C-terminal region. The complex formation is stimulated by calcium or magnesium. Interacts with tubulin-related protein FtsZ.

The protein resides in the cytoplasm. The protein localises to the nucleoid. Plays a central role in chromosome condensation, segregation and cell cycle progression. Functions as a homodimer, which is essential for chromosome partition. Involved in negative DNA supercoiling in vivo, and by this means organize and compact chromosomes. May achieve or facilitate chromosome segregation by condensation DNA from both sides of a centrally located replisome during cell division. The sequence is that of Chromosome partition protein MukB from Sodalis glossinidius (strain morsitans).